The chain runs to 64 residues: Large ribosomal subunit protein bL28 (64 aa).

Belongs to the bacterial ribosomal protein bL28 family.

The polypeptide is Large ribosomal subunit protein bL28 (Bifidobacterium longum (strain NCC 2705)).